A 489-amino-acid chain; its full sequence is Putative (R)-citramalate synthase CimA (489 aa).

The region spanning Val3–Tyr255 is the Pyruvate carboxyltransferase domain.

This sequence belongs to the alpha-IPM synthase/homocitrate synthase family. Homodimer.

The catalysed reaction is pyruvate + acetyl-CoA + H2O = (3R)-citramalate + CoA + H(+). It functions in the pathway amino-acid biosynthesis; L-isoleucine biosynthesis; 2-oxobutanoate from pyruvate: step 1/3. Its function is as follows. Catalyzes the condensation of pyruvate and acetyl-coenzyme A to form (R)-citramalate. This is Putative (R)-citramalate synthase CimA (cimA) from Archaeoglobus fulgidus (strain ATCC 49558 / DSM 4304 / JCM 9628 / NBRC 100126 / VC-16).